A 225-amino-acid chain; its full sequence is 7-cyano-7-deazaguanine synthase (225 aa).

9-19 (LSGGLDSATCL) serves as a coordination point for ATP. Positions 189, 199, 202, and 205 each coordinate Zn(2+).

This sequence belongs to the QueC family. Requires Zn(2+) as cofactor.

It catalyses the reaction 7-carboxy-7-deazaguanine + NH4(+) + ATP = 7-cyano-7-deazaguanine + ADP + phosphate + H2O + H(+). Its pathway is purine metabolism; 7-cyano-7-deazaguanine biosynthesis. Catalyzes the ATP-dependent conversion of 7-carboxy-7-deazaguanine (CDG) to 7-cyano-7-deazaguanine (preQ(0)). This is 7-cyano-7-deazaguanine synthase from Dechloromonas aromatica (strain RCB).